We begin with the raw amino-acid sequence, 244 residues long: Thiol S-methyltransferase TMT1B (244 aa).

Residues 1 to 23 (MDVLVPLLQLLVLLLTLPLHLLA) form the signal peptide.

It belongs to the methyltransferase superfamily. Highly expressed in liver and kidney. No expression in testis, heart, lung, brain, spleen or cultured fibroblasts.

It localises to the endoplasmic reticulum membrane. Its subcellular location is the lipid droplet. It is found in the microsome. The protein resides in the cytoplasm. The protein localises to the cytosol. It carries out the reaction a thiol + S-adenosyl-L-methionine = a methyl thioether + S-adenosyl-L-homocysteine + H(+). Thiol S-methyltransferase that catalyzes the transfer of a methyl group from S-adenosyl-L-methionine to alkyl and phenolic thiol-containing acceptor substrates. Together with TMT1B accounts for most of S-thiol methylation activity in the endoplasmic reticulum of hepatocytes. Selectively methylates S-centered nucleophiles from metabolites such as hydrogen sulfide and dithiothreitol. The polypeptide is Thiol S-methyltransferase TMT1B (Tmt1b) (Rattus norvegicus (Rat)).